We begin with the raw amino-acid sequence, 147 residues long: Small ribosomal subunit protein uS5 (147 aa).

The 64-residue stretch at 9–72 folds into the S5 DRBM domain; that stretch reads FEEVIVDIGR…DDAFKNIVEV (64 aa).

This sequence belongs to the universal ribosomal protein uS5 family. In terms of assembly, part of the 30S ribosomal subunit. Contacts proteins S4 and S8.

With S4 and S12 plays an important role in translational accuracy. In terms of biological role, located at the back of the 30S subunit body where it stabilizes the conformation of the head with respect to the body. In Campylobacter jejuni subsp. jejuni serotype O:6 (strain 81116 / NCTC 11828), this protein is Small ribosomal subunit protein uS5.